Reading from the N-terminus, the 495-residue chain is Glutamate--tRNA ligase (495 aa).

The 'HIGH' region signature appears at 13 to 23; the sequence is PSPTGTPHVGL. A 'KMSKS' region motif is present at residues 257–261; it reads KLSKR. Lys260 contributes to the ATP binding site.

The protein belongs to the class-I aminoacyl-tRNA synthetase family. Glutamate--tRNA ligase type 1 subfamily. In terms of assembly, monomer.

The protein localises to the cytoplasm. The catalysed reaction is tRNA(Glu) + L-glutamate + ATP = L-glutamyl-tRNA(Glu) + AMP + diphosphate. Functionally, catalyzes the attachment of glutamate to tRNA(Glu) in a two-step reaction: glutamate is first activated by ATP to form Glu-AMP and then transferred to the acceptor end of tRNA(Glu). The polypeptide is Glutamate--tRNA ligase (Mycolicibacterium vanbaalenii (strain DSM 7251 / JCM 13017 / BCRC 16820 / KCTC 9966 / NRRL B-24157 / PYR-1) (Mycobacterium vanbaalenii)).